Here is a 402-residue protein sequence, read N- to C-terminus: S-adenosylmethionine synthase (402 aa).

137–142 serves as a coordination point for ATP; sequence GQGSAD.

The protein belongs to the AdoMet synthase 2 family. It depends on Mg(2+) as a cofactor.

It carries out the reaction L-methionine + ATP + H2O = S-adenosyl-L-methionine + phosphate + diphosphate. It participates in amino-acid biosynthesis; S-adenosyl-L-methionine biosynthesis; S-adenosyl-L-methionine from L-methionine: step 1/1. Catalyzes the formation of S-adenosylmethionine from methionine and ATP. This is S-adenosylmethionine synthase from Pyrobaculum neutrophilum (strain DSM 2338 / JCM 9278 / NBRC 100436 / V24Sta) (Thermoproteus neutrophilus).